Reading from the N-terminus, the 79-residue chain is MKILAFFIFVLLIFSCSSSMIMGVHYHEYRCHDWVDCAIWCKQWVPQPKCINRVCDCKPKSLPTNEEVPQSAYSSNSNY.

The N-terminal stretch at 1–19 (MKILAFFIFVLLIFSCSSS) is a signal peptide. 3 disulfide bridges follow: Cys31/Cys50, Cys37/Cys55, and Cys41/Cys57.

It belongs to the DEFL family.

The protein localises to the secreted. The protein is Putative defensin-like protein 309 of Arabidopsis thaliana (Mouse-ear cress).